An 87-amino-acid polypeptide reads, in one-letter code: U3-theraphotoxin-Hhn1l (87 aa).

A signal peptide spans 1–24 (MVNMKASMFLTFAGLVLLFVVCYA). A propeptide spanning residues 25-52 (SESEEKEFPKEMLSSIFAVDNDFKQEER) is cleaved from the precursor. Cystine bridges form between Cys54-Cys67, Cys61-Cys72, and Cys66-Cys79.

This sequence belongs to the neurotoxin 10 (Hwtx-1) family. 51 (Hntx-8) subfamily. Hntx-8 sub-subfamily. Expressed by the venom gland.

It localises to the secreted. In terms of biological role, ion channel inhibitor. This chain is U3-theraphotoxin-Hhn1l, found in Cyriopagopus hainanus (Chinese bird spider).